The sequence spans 450 residues: Glucose-6-phosphate isomerase (450 aa).

T39 carries the post-translational modification Phosphothreonine. The Proton donor role is filled by E291. Catalysis depends on residues H312 and K426.

Belongs to the GPI family.

It localises to the cytoplasm. The enzyme catalyses alpha-D-glucose 6-phosphate = beta-D-fructose 6-phosphate. It participates in carbohydrate biosynthesis; gluconeogenesis. The protein operates within carbohydrate degradation; glycolysis; D-glyceraldehyde 3-phosphate and glycerone phosphate from D-glucose: step 2/4. Catalyzes the reversible isomerization of glucose-6-phosphate to fructose-6-phosphate. This is Glucose-6-phosphate isomerase from Bacillus cereus (strain AH187).